A 309-amino-acid polypeptide reads, in one-letter code: Low density lipoprotein receptor adapter protein 1-A (309 aa).

Residues 41-195 (LLEGMLFHLK…SGGEGASSSQ (155 aa)) form the PID domain. The tract at residues 179-199 (EKREKSGSGGEGASSSQSDGS) is disordered. A Clathrin box motif is present at residues 213 to 217 (LLDLE). Residues 250 to 277 (WELDDGLDEAFARLAESRTNPQVLDIGL) are AP-2 complex binding. Residues 258-267 (EAFARLAESR) carry the [DE]-X(1,2)-F-X-X-[FL]-X-X-X-R motif motif.

Interacts (via PID domain) with ldlr (via NPXY motif). Binds to soluble clathrin trimers and to the adapter protein complex 2 (AP-2, beta 2 subunit). Binds to phosphoinositides, which regulate clathrin bud assembly at the cell surface. Interacts with the VLDL receptor (vldlr). Interacts with the vitellogenin receptor. As to expression, expressed at high level during oogenesis and embryogenesis. Found in the oocyte vegetal cortex. Found at low level in the adult liver and spleen. Found at very low level in testis and heart.

It localises to the cytoplasm. Its function is as follows. Adapter protein (clathrin-associated sorting protein (CLASP)) required for efficient endocytosis of the LDL receptor (LDLR). Also involved in the vitellogenin receptor mediated endocytosis of nutrients during oogenesis. This Xenopus laevis (African clawed frog) protein is Low density lipoprotein receptor adapter protein 1-A.